Consider the following 90-residue polypeptide: MKFNVEIHKRVLKDLKDLPPSNLKKFKELIETLKTNPIPKEKFDIKRLKGSDEVYRVRIGKFRVQYVVLWDDRIIIIRKISRREGAYKNP.

Belongs to the RelE toxin family.

Functionally, toxic component of a type II toxin-antitoxin (TA) system. Its cognate antitoxin is RelB1 (Potential). The polypeptide is Putative toxin RelE1 (relE1) (Methanocaldococcus jannaschii (strain ATCC 43067 / DSM 2661 / JAL-1 / JCM 10045 / NBRC 100440) (Methanococcus jannaschii)).